A 408-amino-acid chain; its full sequence is Na(+)-translocating NADH-quinone reductase subunit F (408 aa).

The helical transmembrane segment at 4–24 threads the bilayer; the sequence is IYLGVGMFIAIVLALVLIIMF. Positions 33–127 constitute a 2Fe-2S ferredoxin-type domain; that stretch reads GEVTISINGD…DMDIELPEEI (95 aa). 4 residues coordinate [2Fe-2S] cluster: Cys70, Cys76, Cys79, and Cys111. The region spanning 130–270 is the FAD-binding FR-type domain; it reads IKKWDCEVIS…SGPFGEFFAK (141 aa).

The protein belongs to the NqrF family. As to quaternary structure, composed of six subunits; NqrA, NqrB, NqrC, NqrD, NqrE and NqrF. [2Fe-2S] cluster is required as a cofactor. The cofactor is FAD.

Its subcellular location is the cell inner membrane. The enzyme catalyses a ubiquinone + n Na(+)(in) + NADH + H(+) = a ubiquinol + n Na(+)(out) + NAD(+). Its function is as follows. NQR complex catalyzes the reduction of ubiquinone-1 to ubiquinol by two successive reactions, coupled with the transport of Na(+) ions from the cytoplasm to the periplasm. The first step is catalyzed by NqrF, which accepts electrons from NADH and reduces ubiquinone-1 to ubisemiquinone by a one-electron transfer pathway. The polypeptide is Na(+)-translocating NADH-quinone reductase subunit F (Pseudoalteromonas atlantica (strain T6c / ATCC BAA-1087)).